Consider the following 100-residue polypeptide: Competence protein ComGE (100 aa).

A helical transmembrane segment spans residues 15–35; that stretch reads VILLEAVVALAIFASIATLLL.

The transformation pili are flexible filaments, consisting mainly of the major pilin ComGC and smaller amounts of the minor pilins, including at least ComGD, ComGF and ComGG, and perhaps ComGE. Interacts with ComGD. Interacts with ComGF. Interacts with ComGG.

The protein localises to the cell membrane. The protein resides in the cell surface. Its function is as follows. Required for formation of the type IV-like pilus (T4P) that plays a role in transformation. Transformation pili are dynamically extended and retracted, perhaps thereby promoting DNA uptake and transformation. Involved in transformation. Required for DNA binding. The protein is Competence protein ComGE of Streptococcus pneumoniae (strain ATCC BAA-255 / R6).